Here is a 750-residue protein sequence, read N- to C-terminus: Photosystem I P700 chlorophyll a apoprotein A1 (750 aa).

8 helical membrane passes run 70 to 93 (VFSA…FHGA), 156 to 179 (LYCT…FHYH), 195 to 219 (LNHH…HVSL), 291 to 309 (IAHH…GHMY), 346 to 369 (WHAQ…HHMY), 385 to 411 (LSLF…IFMV), 433 to 455 (AIIS…LYIH), and 531 to 549 (FLVH…LILL). Positions 573 and 582 each coordinate [4Fe-4S] cluster. 2 consecutive transmembrane segments (helical) span residues 589–610 (HVFL…HFSW) and 664–686 (LSAY…MFLF). Residue H675 coordinates chlorophyll a'. Positions 683 and 691 each coordinate chlorophyll a. Residue W692 participates in phylloquinone binding. A helical membrane pass occupies residues 724-744 (AVGVTHYLLGGIATTWAFFLA).

This sequence belongs to the PsaA/PsaB family. As to quaternary structure, the PsaA/B heterodimer binds the P700 chlorophyll special pair and subsequent electron acceptors. PSI consists of a core antenna complex that captures photons, and an electron transfer chain that converts photonic excitation into a charge separation. The eukaryotic PSI reaction center is composed of at least 11 subunits. The cofactor is P700 is a chlorophyll a/chlorophyll a' dimer, A0 is one or more chlorophyll a, A1 is one or both phylloquinones and FX is a shared 4Fe-4S iron-sulfur center..

It is found in the plastid. It localises to the chloroplast thylakoid membrane. The catalysed reaction is reduced [plastocyanin] + hnu + oxidized [2Fe-2S]-[ferredoxin] = oxidized [plastocyanin] + reduced [2Fe-2S]-[ferredoxin]. In terms of biological role, psaA and PsaB bind P700, the primary electron donor of photosystem I (PSI), as well as the electron acceptors A0, A1 and FX. PSI is a plastocyanin-ferredoxin oxidoreductase, converting photonic excitation into a charge separation, which transfers an electron from the donor P700 chlorophyll pair to the spectroscopically characterized acceptors A0, A1, FX, FA and FB in turn. Oxidized P700 is reduced on the lumenal side of the thylakoid membrane by plastocyanin. This is Photosystem I P700 chlorophyll a apoprotein A1 from Solanum bulbocastanum (Wild potato).